We begin with the raw amino-acid sequence, 467 residues long: Uronate isomerase (467 aa).

This sequence belongs to the metallo-dependent hydrolases superfamily. Uronate isomerase family.

It catalyses the reaction D-glucuronate = D-fructuronate. The enzyme catalyses aldehydo-D-galacturonate = keto-D-tagaturonate. Its pathway is carbohydrate metabolism; pentose and glucuronate interconversion. The protein is Uronate isomerase of Flavobacterium johnsoniae (strain ATCC 17061 / DSM 2064 / JCM 8514 / BCRC 14874 / CCUG 350202 / NBRC 14942 / NCIMB 11054 / UW101) (Cytophaga johnsonae).